A 204-amino-acid chain; its full sequence is Salt stress root protein RS1 (204 aa).

Residues 128–204 form a disordered region; the sequence is FVPKEEPKPE…AAPAAEPEKQ (77 aa). A compositionally biased stretch (basic and acidic residues) spans 147–161; sequence TSREVAVEEEKKEEE. Over residues 164–180 the composition is skewed to low complexity; the sequence is PAEPAAAAAEAAAPSTE. Over residues 182 to 192 the composition is skewed to basic and acidic residues; the sequence is VEEKKEEEKPA. The segment covering 193-204 has biased composition (low complexity); sequence EAAAPAAEPEKQ.

Belongs to the DREPP family.

This is Salt stress root protein RS1 from Oryza sativa subsp. indica (Rice).